A 389-amino-acid polypeptide reads, in one-letter code: Putative sugar efflux transporter DR_1322 (389 aa).

12 consecutive transmembrane segments (helical) span residues 10–30 (AVLLLGLATSLAGPFMSLFAV), 34–54 (GMTPLQLGLFLTFNALSAVLV), 69–89 (KPLVLLTLAAGVLAYLALSGV), 96–116 (MATGVLLLAVSSAAFPQVFAF), 135–155 (VLRAVFSFAWVVGPGVGAAVL), 161–181 (SGVFLLAALCYALAGLPLLFI), 211–231 (GWVVAAFTLYGMAMHMGMVMF), 246–266 (VGFLVGLCALLEIPVMLLFVL), 281–301 (LLLFVVHFALIYLAQGMPLLI), 308–328 (AAVLAVMAGLGMTYFQQLMPG), 341–361 (SVVGSMLSGIVAGAWAQVFGY), and 363–383 (PVFLLCAALSLAAWGMMLWAT).

Belongs to the major facilitator superfamily. Set transporter family.

The protein resides in the cell membrane. Functionally, involved in the efflux of sugars. The physiological role may be the detoxification of non-metabolizable sugar analogs. This chain is Putative sugar efflux transporter DR_1322, found in Deinococcus radiodurans (strain ATCC 13939 / DSM 20539 / JCM 16871 / CCUG 27074 / LMG 4051 / NBRC 15346 / NCIMB 9279 / VKM B-1422 / R1).